The primary structure comprises 172 residues: MASGPHSTATAAAAASSAAPSAGGSSSGTTTTTTTTTGGILIGDRLYSEVSLTIDHSLIPEERLSPTPSMQDGLDLPSETDLRILGCELIQAAGILLRLPQVAMATGQVLFHRFFYSKSFVKHSFEIVAMACINLASKIEEAPRRIRDVINVFHHLRQLRGKSDQLHLPKPG.

The disordered stretch occupies residues 1–36 (MASGPHSTATAAAAASSAAPSAGGSSSGTTTTTTTT). The segment at 88-168 (ELIQAAGILL…LRGKSDQLHL (81 aa)) is cyclin-like.

It belongs to the cyclin family. Cyclin L subfamily. Interacts with POLR2A via its hyperphosphorylated C-terminal domain (CTD). Interacts with CDK11A, CDK11B, CDK12 and CDK13. May form a ternary complex with CDK11B and casein kinase II (CKII). Interacts with pre-mRNA-splicing factors, including at least SRSF1, SRSF2 and SRSF7/SLU7.

Its subcellular location is the nucleus speckle. It is found in the nucleus. It localises to the nucleoplasm. Involved in pre-mRNA splicing. Functions in association with cyclin-dependent kinases (CDKs). May play a role in the regulation of RNA polymerase II (pol II). Inhibited by the CDK-specific inhibitor CDKN1A/p21. This is Cyclin-L1 (CCNL1) from Pongo abelii (Sumatran orangutan).